A 225-amino-acid polypeptide reads, in one-letter code: Ribose-5-phosphate isomerase A (225 aa).

Substrate-binding positions include 26 to 29 (TGST), 82 to 85 (DGAD), and 95 to 98 (KGGG). Residue Glu-104 is the Proton acceptor of the active site. Lys-122 is a binding site for substrate.

It belongs to the ribose 5-phosphate isomerase family. As to quaternary structure, homodimer.

The enzyme catalyses aldehydo-D-ribose 5-phosphate = D-ribulose 5-phosphate. Its pathway is carbohydrate degradation; pentose phosphate pathway; D-ribose 5-phosphate from D-ribulose 5-phosphate (non-oxidative stage): step 1/1. In terms of biological role, catalyzes the reversible conversion of ribose-5-phosphate to ribulose 5-phosphate. The polypeptide is Ribose-5-phosphate isomerase A (Streptococcus gordonii (strain Challis / ATCC 35105 / BCRC 15272 / CH1 / DL1 / V288)).